The primary structure comprises 258 residues: uncharacterized protein (258 aa).

Helical transmembrane passes span 21 to 41 (LIWL…TIYY), 73 to 93 (LSQF…GSVA), 119 to 139 (WLIQ…LAYY), 153 to 173 (FAAS…AGLA), 182 to 202 (GAAA…VSLF), and 229 to 249 (FFGW…VFSV).

The protein resides in the cell membrane. This is an uncharacterized protein from Bacillus subtilis (strain 168).